Reading from the N-terminus, the 287-residue chain is Probable ABC transporter extracellular-binding protein YckB (287 aa).

Positions Met1–Ala24 are cleaved as a signal peptide. Cys25 carries N-palmitoyl cysteine lipidation. A lipid anchor (S-diacylglycerol cysteine) is attached at Cys25.

Belongs to the bacterial solute-binding protein 3 family.

The protein localises to the cell membrane. Functionally, probably part of a binding-protein-dependent transport system. The protein is Probable ABC transporter extracellular-binding protein YckB (yckB) of Bacillus subtilis (strain 168).